A 568-amino-acid polypeptide reads, in one-letter code: Potassium-transporting ATPase potassium-binding subunit (568 aa).

A run of 10 helical transmembrane segments spans residues 3 to 23 (TEIL…YPLG), 64 to 84 (FLKA…VLLV), 133 to 153 (FVIM…MAGI), 179 to 199 (ILLP…TPMG), 255 to 275 (MVEC…LGFY), 281 to 301 (LAYS…CINV), 375 to 395 (FGGV…AVFI), 418 to 438 (IATI…AISS), 497 to 517 (IVLI…AGLL), and 536 to 556 (TFGI…FFPV).

The protein belongs to the KdpA family. The system is composed of three essential subunits: KdpA, KdpB and KdpC.

It is found in the cell inner membrane. Part of the high-affinity ATP-driven potassium transport (or Kdp) system, which catalyzes the hydrolysis of ATP coupled with the electrogenic transport of potassium into the cytoplasm. This subunit binds the periplasmic potassium ions and delivers the ions to the membrane domain of KdpB through an intramembrane tunnel. This Bacteroides thetaiotaomicron (strain ATCC 29148 / DSM 2079 / JCM 5827 / CCUG 10774 / NCTC 10582 / VPI-5482 / E50) protein is Potassium-transporting ATPase potassium-binding subunit.